We begin with the raw amino-acid sequence, 175 residues long: uncharacterized protein (175 aa).

This is an uncharacterized protein from Methanocaldococcus jannaschii (strain ATCC 43067 / DSM 2661 / JAL-1 / JCM 10045 / NBRC 100440) (Methanococcus jannaschii).